A 589-amino-acid polypeptide reads, in one-letter code: ATP-dependent lipid A-core flippase (589 aa).

5 helical membrane passes run 29-49 (LLLV…TGFL), 70-90 (WLPV…YITD), 157-177 (VIGA…TILV), 261-281 (MIGA…ALAG), and 283-303 (LTAG…PGLK). In terms of domain architecture, ABC transmembrane type-1 spans 32-314 (VAALIAALIE…LTNVQNMVQR (283 aa)). The ABC transporter domain occupies 346–582 (IEFRDVTARY…GGLYSHLHGM (237 aa)). ATP is bound at residue 380–387 (GRSGSGKS).

This sequence belongs to the ABC transporter superfamily. Lipid exporter (TC 3.A.1.106) family. In terms of assembly, homodimer.

The protein resides in the cell inner membrane. It carries out the reaction ATP + H2O + lipid A-core oligosaccharideSide 1 = ADP + phosphate + lipid A-core oligosaccharideSide 2.. Its function is as follows. Involved in lipopolysaccharide (LPS) biosynthesis. Translocates lipid A-core from the inner to the outer leaflet of the inner membrane. Transmembrane domains (TMD) form a pore in the inner membrane and the ATP-binding domain (NBD) is responsible for energy generation. In Xanthomonas axonopodis pv. citri (strain 306), this protein is ATP-dependent lipid A-core flippase.